The primary structure comprises 200 residues: Type 1 fimbriae regulatory protein FimB (200 aa).

The 182-residue stretch at 8 to 189 (KKRNFLTHSE…NAGRFYGIWD (182 aa)) folds into the Tyr recombinase domain. Active-site residues include Arg47, Lys72, His141, Arg144, and His167. Tyr176 acts as the O-(3'-phospho-DNA)-tyrosine intermediate in catalysis.

The protein belongs to the 'phage' integrase family.

FimB is one of the 2 regulatory proteins which control the phase variation of type 1 fimbriae in E.coli. These proteins mediate the periodic inversion of a 300bp DNA segment that harbors the promoter for the fimbrial structural gene, fimA. FimB switches fimA on. The polypeptide is Type 1 fimbriae regulatory protein FimB (fimB) (Escherichia coli O157:H7).